The chain runs to 421 residues: UDP-N-acetylglucosamine 1-carboxyvinyltransferase (421 aa).

22-23 (KN) contributes to the phosphoenolpyruvate binding site. Residue arginine 93 coordinates UDP-N-acetyl-alpha-D-glucosamine. The Proton donor role is filled by cysteine 117. Cysteine 117 is subject to 2-(S-cysteinyl)pyruvic acid O-phosphothioketal. Residues 122–126 (RPVDL), aspartate 308, and valine 330 contribute to the UDP-N-acetyl-alpha-D-glucosamine site.

It belongs to the EPSP synthase family. MurA subfamily.

The protein localises to the cytoplasm. It catalyses the reaction phosphoenolpyruvate + UDP-N-acetyl-alpha-D-glucosamine = UDP-N-acetyl-3-O-(1-carboxyvinyl)-alpha-D-glucosamine + phosphate. It functions in the pathway cell wall biogenesis; peptidoglycan biosynthesis. In terms of biological role, cell wall formation. Adds enolpyruvyl to UDP-N-acetylglucosamine. In Azotobacter vinelandii (strain DJ / ATCC BAA-1303), this protein is UDP-N-acetylglucosamine 1-carboxyvinyltransferase.